A 122-amino-acid chain; its full sequence is Large ribosomal subunit protein uL18 (122 aa).

The protein belongs to the universal ribosomal protein uL18 family. As to quaternary structure, part of the 50S ribosomal subunit; part of the 5S rRNA/L5/L18/L25 subcomplex. Contacts the 5S and 23S rRNAs.

Functionally, this is one of the proteins that bind and probably mediate the attachment of the 5S RNA into the large ribosomal subunit, where it forms part of the central protuberance. The sequence is that of Large ribosomal subunit protein uL18 from Buchnera aphidicola subsp. Acyrthosiphon pisum (strain 5A).